A 183-amino-acid chain; its full sequence is MDIDPYKEFGATVELLSFLPSDFFPSVRDLLDTASALYREALESPEHCSPHHTALRQAILCWGDLITLSTWVGGNLEDPTSRDLVVSYVNTNMGLKFRQLLWFHISCLTFGRETVIEYLVSFGVWIRTPPAYRPPNAPILSTLPETTVVRRRGRSPRRRTPSPRRRRSQSPRRRRTQSRESQC.

A disordered region spans residues 136 to 183; that stretch reads NAPILSTLPETTVVRRRGRSPRRRTPSPRRRRSQSPRRRRTQSRESQC. The segment covering 149–176 has biased composition (basic residues); sequence VRRRGRSPRRRTPSPRRRRSQSPRRRRT. Phosphoserine; by host is present on residues Ser155, Ser162, and Ser170. The stretch at 155–161 is one 1; half-length repeat; that stretch reads SPRRRTP. The 3 X 8 AA repeats of S-P-R-R-R-[PR]-[ST]-Q stretch occupies residues 155-177; that stretch reads SPRRRTPSPRRRRSQSPRRRRTQ. The short motif at 158–175 is the Bipartite nuclear localization signal element; that stretch reads RRTPSPRRRRSQSPRRRR. 2 tandem repeats follow at residues 162–169 and 170–177. The segment at 177–183 is RNA binding; the sequence is QSRESQC.

This sequence belongs to the orthohepadnavirus core antigen family. In terms of assembly, homodimerizes, then multimerizes. Interacts with cytosol exposed regions of viral L glycoprotein present in the reticulum-to-Golgi compartment. Interacts with human FLNB. Phosphorylated form interacts with host importin alpha; this interaction depends on the exposure of the NLS, which itself depends upon genome maturation and/or phosphorylation of the capsid protein. Interacts with host NUP153. In terms of processing, phosphorylated by host SRPK1, SRPK2, and maybe protein kinase C or GAPDH. Phosphorylation is critical for pregenomic RNA packaging. Protein kinase C phosphorylation is stimulated by HBx protein and may play a role in transport of the viral genome to the nucleus at the late step during the viral replication cycle.

Its subcellular location is the virion. The protein resides in the host cytoplasm. Functionally, self assembles to form an icosahedral capsid. Most capsids appear to be large particles with an icosahedral symmetry of T=4 and consist of 240 copies of capsid protein, though a fraction forms smaller T=3 particles consisting of 180 capsid proteins. Entering capsids are transported along microtubules to the nucleus. Phosphorylation of the capsid is thought to induce exposure of nuclear localization signal in the C-terminal portion of the capsid protein that allows binding to the nuclear pore complex via the importin (karyopherin-) alpha and beta. Capsids are imported in intact form through the nuclear pore into the nuclear basket, where it probably binds NUP153. Only capsids that contain the mature viral genome can release the viral DNA and capsid protein into the nucleoplasm. Immature capsids get stuck in the basket. Capsids encapsulate the pre-genomic RNA and the P protein. Pre-genomic RNA is reverse-transcribed into DNA while the capsid is still in the cytoplasm. The capsid can then either be directed to the nucleus, providing more genomes for transcription, or bud through the endoplasmic reticulum to provide new virions. The chain is Capsid protein from Hepatitis B virus genotype D (isolate France/alpha1/1989) (HBV-D).